A 605-amino-acid chain; its full sequence is Leucine-rich repeat-containing protein 40 (605 aa).

A disordered region spans residues 1–21; that stretch reads MSRFKRGGKAPDPLSGFRAPK. LRR repeat units lie at residues 83 to 104, 106 to 127, 129 to 151, 152 to 173, 175 to 196, 198 to 219, 221 to 242, 244 to 265, 266 to 287, 290 to 311, 313 to 335, 336 to 357, 429 to 450, 453 to 475, 476 to 497, 499 to 520, 522 to 543, 546 to 567, and 569 to 590; these read DLTK…ISLL, ALVV…IREL, NLQK…QHLQ, NLKS…IGHL, ILEE…VGQL, GLVK…IGKM, NLRQ…VAGM, SLEQ…PFLT, KLKE…HLQN, SLSV…ISLL, GLER…GSLP, NLKS…ILNK, PITT…IVEM, SVYD…CMLL, KLTH…MEAL, RLQS…LYTI, NLET…QLKK, KLST…LGNC, and SLRA…ILAK.

The polypeptide is Leucine-rich repeat-containing protein 40 (lrrc40) (Xenopus laevis (African clawed frog)).